Here is a 636-residue protein sequence, read N- to C-terminus: Probable potassium transport system protein Kup (636 aa).

A run of 12 helical transmembrane segments spans residues 22-42, 64-84, 115-135, 150-170, 182-202, 220-240, 261-281, 293-313, 351-371, 383-403, 408-428, and 433-453; these read VGLL…SPLY, ILSL…VMFI, LMVI…MITP, FDGI…ALFL, LFGP…VHGI, FFVV…LALT, WFIL…ALLL, LLAP…ATVI, IYIG…VIGF, VAVT…MLLL, PLLA…FFAA, and IAQG…LMST.

Belongs to the HAK/KUP transporter (TC 2.A.72) family.

It localises to the cell inner membrane. The enzyme catalyses K(+)(in) + H(+)(in) = K(+)(out) + H(+)(out). Functionally, transport of potassium into the cell. Likely operates as a K(+):H(+) symporter. The polypeptide is Probable potassium transport system protein Kup (Pseudomonas putida (strain ATCC 47054 / DSM 6125 / CFBP 8728 / NCIMB 11950 / KT2440)).